Here is a 769-residue protein sequence, read N- to C-terminus: Metal transporter CNNM4 (769 aa).

At 1–175 (MAASAGCYYG…RLRVLEEEKP (175 aa)) the chain is on the extracellular side. N-linked (GlcNAc...) asparagine glycans are attached at residues Asn99 and Asn115. One can recognise a CNNM transmembrane domain in the interval 175 to 355 (PLLPIWLQAC…EPYSGIVREE (181 aa)). Residues 176 to 196 (LLPIWLQACIIAVLLTLSGIF) form a helical membrane-spanning segment. At 197-237 (SGLNLGLMALDPMELRVVQRCGTEKEKRYASKIEPVRRKGN) the chain is on the cytoplasmic side. The segment at residues 238 to 258 (YLLCSLLLGNVLVNTTLTALL) is an intramembrane region (helical). The Cytoplasmic segment spans residues 259 to 261 (DEL). The chain crosses the membrane as a helical span at residues 262–282 (IGSGLAAVLASTTGIVVLGEI). Residues 283–292 (VPQALCSRHG) are Extracellular-facing. The helical transmembrane segment at 293–313 (LAVGANTLWLTRIFMLLTFPV) threads the bilayer. The Cytoplasmic segment spans residues 314–769 (AYPVSRLLDC…SQHSLQHNAV (456 aa)). 2 CBS domains span residues 374-435 (MTKV…CTPL) and 442-508 (YSHP…ILDE). The tract at residues 717-769 (LMSSRLDSSPQSPEGGTRKPDSTLSERSEVLEDETTSLLNQRNSQHSLQHNAV) is disordered. Positions 721 to 730 (RLDSSPQSPE) are enriched in polar residues. The span at 732 to 746 (GTRKPDSTLSERSEV) shows a compositional bias: basic and acidic residues. Residues 752-769 (TSLLNQRNSQHSLQHNAV) show a composition bias toward polar residues.

This sequence belongs to the ACDP family.

The protein resides in the cell membrane. Functionally, probable metal transporter. The sequence is that of Metal transporter CNNM4 (cnnm4) from Xenopus tropicalis (Western clawed frog).